Reading from the N-terminus, the 122-residue chain is MVQQESRLKVADNTGAKELLVIRVMGGSTRRYANIGDVIVATVKDATPGGVVKKGDVVKAVVVRSVKGARRKDGSYIKFDENAAVIIKDDKTPKGTRIFGPVARELREKQFMKIVSLAPEVL.

The protein belongs to the universal ribosomal protein uL14 family. In terms of assembly, part of the 50S ribosomal subunit. Forms a cluster with proteins L3 and L19. In the 70S ribosome, L14 and L19 interact and together make contacts with the 16S rRNA in bridges B5 and B8.

Binds to 23S rRNA. Forms part of two intersubunit bridges in the 70S ribosome. This chain is Large ribosomal subunit protein uL14, found in Agathobacter rectalis (strain ATCC 33656 / DSM 3377 / JCM 17463 / KCTC 5835 / VPI 0990) (Eubacterium rectale).